Consider the following 116-residue polypeptide: MHHLIQEITKEQLRTDLPDFRPGDTVRVHVKVVEGNRERIQVFEGVVIKRRGAGISETFTVRKVSYGVGVERTFPVHTPKIAKLEVIRRGKVRRAKLYYLRELRGKAARIKEKTAQ.

Belongs to the bacterial ribosomal protein bL19 family.

This protein is located at the 30S-50S ribosomal subunit interface and may play a role in the structure and function of the aminoacyl-tRNA binding site. The protein is Large ribosomal subunit protein bL19 (rplS) of Geobacillus stearothermophilus (Bacillus stearothermophilus).